Here is a 364-residue protein sequence, read N- to C-terminus: Dihydroorotase (364 aa).

Zn(2+)-binding residues include His-14, His-16, Lys-98, His-137, His-180, and Asp-258. Position 98 is an N6-carboxylysine (Lys-98).

Belongs to the metallo-dependent hydrolases superfamily. DHOase family. Class II DHOase subfamily. Requires Zn(2+) as cofactor.

The enzyme catalyses (S)-dihydroorotate + H2O = N-carbamoyl-L-aspartate + H(+). Its pathway is pyrimidine metabolism; UMP biosynthesis via de novo pathway; (S)-dihydroorotate from bicarbonate: step 3/3. Its function is as follows. Catalyzes the conversion of ureidosuccinic acid (USA) to dihydroorotate, the third step of the de novo pyrimidine biosynthetic pathway. The sequence is that of Dihydroorotase (URA4) from Saccharomyces cerevisiae (strain ATCC 204508 / S288c) (Baker's yeast).